The following is a 222-amino-acid chain: Octanoyltransferase (222 aa).

The 181-residue stretch at 34–214 (GEAPSTVLLL…EFRKHEEALV (181 aa)) folds into the BPL/LPL catalytic domain. Substrate is bound by residues 72–79 (RGGKLTWH), 144–146 (AIG), and 157–159 (GVA). The active-site Acyl-thioester intermediate is cysteine 175.

Belongs to the LipB family.

It is found in the cytoplasm. It carries out the reaction octanoyl-[ACP] + L-lysyl-[protein] = N(6)-octanoyl-L-lysyl-[protein] + holo-[ACP] + H(+). The protein operates within protein modification; protein lipoylation via endogenous pathway; protein N(6)-(lipoyl)lysine from octanoyl-[acyl-carrier-protein]: step 1/2. Functionally, catalyzes the transfer of endogenously produced octanoic acid from octanoyl-acyl-carrier-protein onto the lipoyl domains of lipoate-dependent enzymes. Lipoyl-ACP can also act as a substrate although octanoyl-ACP is likely to be the physiological substrate. In Pseudarthrobacter chlorophenolicus (strain ATCC 700700 / DSM 12829 / CIP 107037 / JCM 12360 / KCTC 9906 / NCIMB 13794 / A6) (Arthrobacter chlorophenolicus), this protein is Octanoyltransferase.